Consider the following 335-residue polypeptide: Trans-3-hydroxy-L-proline dehydratase (335 aa).

Cys-91 acts as the Proton acceptor in catalysis. Residues 92-93 (GH) and 256-257 (GS) each bind substrate.

Belongs to the proline racemase family. In terms of assembly, homodimer.

The enzyme catalyses trans-3-hydroxy-L-proline = 1-pyrroline-2-carboxylate + H2O. Its pathway is amino-acid degradation. Its function is as follows. Catalyzes the dehydration of trans-3-hydroxy-L-proline (t3LHyp) to Delta(1)-pyrroline-2-carboxylate (Pyr2C). Together with LhpI, is involved in a t3LHyp degradation pathway to L-proline, which allows A.brasilense to grow on t3LHyp as a sole carbon source. This Azospirillum brasilense protein is Trans-3-hydroxy-L-proline dehydratase.